Here is a 240-residue protein sequence, read N- to C-terminus: Adenylate dimethylallyltransferase (240 aa).

The protein belongs to the isopentenyl transferase family.

It catalyses the reaction dimethylallyl diphosphate + AMP = N(6)-(dimethylallyl)adenosine 5'-phosphate + diphosphate. Transfers dimethylallyl groups to AMP as part of the biosynthesis of cytokinin phytohormones. The chain is Adenylate dimethylallyltransferase (ipt) from Agrobacterium vitis (Rhizobium vitis).